Here is a 272-residue protein sequence, read N- to C-terminus: 2-dehydro-3-deoxyphosphooctonate aldolase (272 aa).

This sequence belongs to the KdsA family.

The protein resides in the cytoplasm. It catalyses the reaction D-arabinose 5-phosphate + phosphoenolpyruvate + H2O = 3-deoxy-alpha-D-manno-2-octulosonate-8-phosphate + phosphate. The protein operates within carbohydrate biosynthesis; 3-deoxy-D-manno-octulosonate biosynthesis; 3-deoxy-D-manno-octulosonate from D-ribulose 5-phosphate: step 2/3. It participates in bacterial outer membrane biogenesis; lipopolysaccharide biosynthesis. The polypeptide is 2-dehydro-3-deoxyphosphooctonate aldolase (Geobacter metallireducens (strain ATCC 53774 / DSM 7210 / GS-15)).